The chain runs to 455 residues: uncharacterized protein (455 aa).

Positions M1–A24 are cleaved as a signal peptide.

This is an uncharacterized protein from Pseudomonas aeruginosa (strain ATCC 15692 / DSM 22644 / CIP 104116 / JCM 14847 / LMG 12228 / 1C / PRS 101 / PAO1).